We begin with the raw amino-acid sequence, 53 residues long: Serine rich endogenous peptide 3 (53 aa).

The signal sequence occupies residues 1–26; the sequence is MTKKGPLNLRLLLLLLVVLLPSCSNC. The SCOOP motif signature appears at 37–53; the sequence is SSEWRRKMITVWSKSSY. Positions 49–51 match the SxS motif essential for MIK2 binding motif; the sequence is SKS.

Belongs to the serine rich endogenous peptide (SCOOP) phytocytokine family. In terms of assembly, interacts with MIK2 (via extracellular leucine-rich repeat domain); this interaction triggers the formation of complex between MIK2 and the BAK1/SERK3 and SERK4 coreceptors, and subsequent BAK1 activation by phosphorylation.

It is found in the cell membrane. It localises to the secreted. The protein localises to the extracellular space. The protein resides in the apoplast. Functionally, brassicaceae-specific phytocytokine (plant endogenous peptide released into the apoplast) perceived by MIK2 in a BAK1/SERK3 and SERK4 coreceptors-dependent manner, that modulates various physiological and antimicrobial processes including growth prevention and reactive oxygen species (ROS) response regulation. The polypeptide is Serine rich endogenous peptide 3 (Arabidopsis thaliana (Mouse-ear cress)).